The sequence spans 263 residues: tRNA pseudouridine synthase A (263 aa).

D54 serves as the catalytic Nucleophile. Residue Y113 coordinates substrate.

It belongs to the tRNA pseudouridine synthase TruA family. Homodimer.

The enzyme catalyses uridine(38/39/40) in tRNA = pseudouridine(38/39/40) in tRNA. Formation of pseudouridine at positions 38, 39 and 40 in the anticodon stem and loop of transfer RNAs. This Lactobacillus helveticus (strain DPC 4571) protein is tRNA pseudouridine synthase A.